The primary structure comprises 73 residues: Putative membrane protein insertion efficiency factor (73 aa).

The protein belongs to the UPF0161 family.

The protein resides in the cell inner membrane. Its function is as follows. Could be involved in insertion of integral membrane proteins into the membrane. This chain is Putative membrane protein insertion efficiency factor, found in Phocaeicola vulgatus (strain ATCC 8482 / DSM 1447 / JCM 5826 / CCUG 4940 / NBRC 14291 / NCTC 11154) (Bacteroides vulgatus).